We begin with the raw amino-acid sequence, 110 residues long: Heat shock protein Hsp-12.2 (110 aa).

One can recognise a sHSP domain in the interval 15-110 (DWPLQHNDGV…VLTITASKKA (96 aa)).

This sequence belongs to the small heat shock protein (HSP20) family.

The sequence is that of Heat shock protein Hsp-12.2 (hsp-12.2) from Caenorhabditis elegans.